Here is a 463-residue protein sequence, read N- to C-terminus: Pentatricopeptide repeat-containing protein At2g17670 (463 aa).

The tract at residues methionine 1 to proline 63 is disordered. PPR repeat units follow at residues glycine 121–proline 157, aspartate 158–proline 192, aspartate 193–aspartate 223, aspartate 229–proline 263, aspartate 264–proline 298, aspartate 299–proline 333, aspartate 334–proline 368, asparagine 369–leucine 403, and glutamate 404–serine 438.

The protein belongs to the PPR family. P subfamily.

The chain is Pentatricopeptide repeat-containing protein At2g17670 from Arabidopsis thaliana (Mouse-ear cress).